The chain runs to 195 residues: Protein lin-28 homolog A (195 aa).

The CSD domain occupies 33-106; it reads QGSGVCKWFN…GLESTQVTGP (74 aa). A disordered region spans residues 98–127; the sequence is LESTQVTGPGGAPCIGSERRPKVKGQQKRR. Residues 107–130 are flexible linker; sequence GGAPCIGSERRPKVKGQQKRRQRG. The span at 118-127 shows a compositional bias: basic residues; sequence PKVKGQQKRR. 2 consecutive CCHC-type zinc fingers follow at residues 131–148 and 153–170; these read DRCY…ECKL and KKCH…QCPE. Residues cysteine 133, cysteine 136, histidine 141, cysteine 146, cysteine 155, cysteine 158, histidine 163, and cysteine 168 each coordinate Zn(2+).

Belongs to the lin-28 family. Monomer.

Its subcellular location is the cytoplasm. The protein resides in the rough endoplasmic reticulum. It localises to the P-body. The protein localises to the stress granule. It is found in the nucleus. Its subcellular location is the nucleolus. RNA-binding protein that inhibits processing of pre-let-7 miRNAs and regulates translation of mRNAs that control developmental timing, pluripotency and metabolism. Seems to recognize a common structural G-quartet (G4) feature in its miRNA and mRNA targets. 'Translational enhancer' that drives specific mRNAs to polysomes and increases the efficiency of protein synthesis. Its association with the translational machinery and target mRNAs results in an increased number of initiation events per molecule of mRNA and, indirectly, in mRNA stabilization. Suppressor of microRNA (miRNA) biogenesis, including that of let-7. Binds specific target miRNA precursors (pre-miRNAs), recognizing an 5'-GGAG-3' motif found in their terminal loop, and recruits uridylyltransferase. This results in the terminal uridylation of target pre-miRNAs. Uridylated pre-miRNAs fail to be processed by Dicer and undergo degradation. Localized to the periendoplasmic reticulum area, binds to a large number of spliced mRNAs and inhibits the translation of mRNAs destined for the ER, reducing the synthesis of transmembrane proteins, ER or Golgi lumen proteins, and secretory proteins. Binds to and enhances the translation of mRNAs for several metabolic enzymes, increasing glycolysis and oxidative phosphorylation. Which, with the let-7 repression may enhance tissue repair in adult tissue. The chain is Protein lin-28 homolog A (lin28a) from Xenopus laevis (African clawed frog).